A 118-amino-acid polypeptide reads, in one-letter code: MLVIFLGILGLLASQVSSQLVGQLRPTEDPPEEELEYWCAYMESCQFCWDCQDGTCINKIDGSAIYKNEYVKACLVSRWLDKCMYDLDKGIYHTMNCSQPWSWNPYKYFRKEWKKDEL.

The signal sequence occupies residues 1–18 (MLVIFLGILGLLASQVSS). Residue Asn-96 is glycosylated (N-linked (GlcNAc...) asparagine; by host). The short motif at 115–118 (KDEL) is the Prevents secretion from ER element.

This sequence belongs to the asfivirus MGF 110 family. N-glycosylated.

The protein localises to the host endoplasmic reticulum lumen. Its function is as follows. Plays a role in virus cell tropism, and may be required for efficient virus replication in macrophages. The polypeptide is Protein MGF 110-6L (African swine fever virus (strain Badajoz 1971 Vero-adapted) (Ba71V)).